The sequence spans 117 residues: NADH-ubiquinone oxidoreductase chain 3 (117 aa).

3 helical membrane-spanning segments follow: residues 4-24 (IIII…LASI), 60-80 (ITII…MIII), and 86-106 (IMIW…GLYH).

It belongs to the complex I subunit 3 family.

It is found in the mitochondrion membrane. The enzyme catalyses a ubiquinone + NADH + 5 H(+)(in) = a ubiquinol + NAD(+) + 4 H(+)(out). Functionally, core subunit of the mitochondrial membrane respiratory chain NADH dehydrogenase (Complex I) that is believed to belong to the minimal assembly required for catalysis. Complex I functions in the transfer of electrons from NADH to the respiratory chain. The immediate electron acceptor for the enzyme is believed to be ubiquinone. This chain is NADH-ubiquinone oxidoreductase chain 3 (mt:ND3), found in Drosophila yakuba (Fruit fly).